The chain runs to 189 residues: Apolipoprotein D (189 aa).

Residues 1-20 (MVTMLMFLATLAGLFTTAKG) form the signal peptide. The residue at position 21 (Gln21) is a Pyrrolidone carboxylic acid. 2 cysteine pairs are disulfide-bonded: Cys28-Cys134 and Cys61-Cys185. 2 N-linked (GlcNAc...) asparagine glycosylation sites follow: Asn65 and Asn98.

The protein belongs to the calycin superfamily. Lipocalin family. In terms of assembly, homodimer. Highest levels of expression in brain, testis, virgin mammary gland and salivary gland. Moderate levels in skeletal muscle, lactating mammary gland and thymus. Low levels in lung and lymph node. No expression in kidney, pancreas, liver or spleen.

Its subcellular location is the secreted. Its function is as follows. APOD occurs in the macromolecular complex with lecithin-transport and binding of bilin. Appears to be able to transport a variety of ligands in a number of different contexts. The polypeptide is Apolipoprotein D (Apod) (Mus musculus (Mouse)).